The sequence spans 442 residues: UDP-N-acetylmuramoylalanine--D-glutamate ligase (442 aa).

115–121 (GSNGKST) contacts ATP.

Belongs to the MurCDEF family.

Its subcellular location is the cytoplasm. The enzyme catalyses UDP-N-acetyl-alpha-D-muramoyl-L-alanine + D-glutamate + ATP = UDP-N-acetyl-alpha-D-muramoyl-L-alanyl-D-glutamate + ADP + phosphate + H(+). It functions in the pathway cell wall biogenesis; peptidoglycan biosynthesis. In terms of biological role, cell wall formation. Catalyzes the addition of glutamate to the nucleotide precursor UDP-N-acetylmuramoyl-L-alanine (UMA). The chain is UDP-N-acetylmuramoylalanine--D-glutamate ligase from Vibrio vulnificus (strain YJ016).